We begin with the raw amino-acid sequence, 410 residues long: Arginine biosynthesis bifunctional protein ArgJ (410 aa).

Positions 160, 186, 197, 283, 405, and 410 each coordinate substrate. Catalysis depends on T197, which acts as the Nucleophile.

It belongs to the ArgJ family. As to quaternary structure, heterotetramer of two alpha and two beta chains.

The protein localises to the cytoplasm. It catalyses the reaction N(2)-acetyl-L-ornithine + L-glutamate = N-acetyl-L-glutamate + L-ornithine. The catalysed reaction is L-glutamate + acetyl-CoA = N-acetyl-L-glutamate + CoA + H(+). It participates in amino-acid biosynthesis; L-arginine biosynthesis; L-ornithine and N-acetyl-L-glutamate from L-glutamate and N(2)-acetyl-L-ornithine (cyclic): step 1/1. Its pathway is amino-acid biosynthesis; L-arginine biosynthesis; N(2)-acetyl-L-ornithine from L-glutamate: step 1/4. Its activity is regulated as follows. Competitively inhibited by L-ornithine. In terms of biological role, catalyzes two activities which are involved in the cyclic version of arginine biosynthesis: the synthesis of N-acetylglutamate from glutamate and acetyl-CoA as the acetyl donor, and of ornithine by transacetylation between N(2)-acetylornithine and glutamate. The chain is Arginine biosynthesis bifunctional protein ArgJ from Geobacillus stearothermophilus (Bacillus stearothermophilus).